Consider the following 107-residue polypeptide: Heme-degrading monooxygenase (107 aa).

An ABM domain is found at 2–94 (IIVTNTTKIT…YILDNKIAYY (93 aa)). Position 6 (asparagine 6) interacts with Fe cation. Histidine 76 lines the heme pocket.

It belongs to the antibiotic biosynthesis monooxygenase family. Heme-degrading monooxygenase IsdG subfamily. In terms of assembly, homodimer.

It localises to the cytoplasm. The catalysed reaction is heme b + 3 reduced [NADPH--hemoprotein reductase] + 3 O2 = biliverdin IXalpha + CO + Fe(2+) + 3 oxidized [NADPH--hemoprotein reductase] + 3 H2O + H(+). Functionally, allows bacterial pathogens to use the host heme as an iron source. Catalyzes the oxidative degradation of the heme macrocyclic porphyrin ring to the biliverdin in the presence of a suitable electron donor such as ascorbate or NADPH--cytochrome P450 reductase, with subsequent release of free iron. The sequence is that of Heme-degrading monooxygenase from Bacillus mycoides (strain KBAB4) (Bacillus weihenstephanensis).